A 319-amino-acid polypeptide reads, in one-letter code: ATP-dependent 6-phosphofructokinase (319 aa).

Position 11 (Gly11) interacts with ATP. 21–25 is a binding site for ADP; that stretch reads RAVVR. Residues 72-73 and 102-105 contribute to the ATP site; these read RC and GDGS. Position 103 (Asp103) interacts with Mg(2+). 125–127 serves as a coordination point for substrate; sequence TID. The active-site Proton acceptor is the Asp127. Arg154 provides a ligand contact to ADP. Substrate contacts are provided by residues Arg162 and 169 to 171; that span reads MGR. Residues 185-187, Arg211, and 213-215 contribute to the ADP site; these read GAE and KKH. Substrate-binding positions include Glu222, Arg243, and 249–252; that span reads HIQR.

It belongs to the phosphofructokinase type A (PFKA) family. ATP-dependent PFK group I subfamily. Prokaryotic clade 'B1' sub-subfamily. As to quaternary structure, homotetramer. Requires Mg(2+) as cofactor.

Its subcellular location is the cytoplasm. It carries out the reaction beta-D-fructose 6-phosphate + ATP = beta-D-fructose 1,6-bisphosphate + ADP + H(+). Its pathway is carbohydrate degradation; glycolysis; D-glyceraldehyde 3-phosphate and glycerone phosphate from D-glucose: step 3/4. Allosterically activated by ADP and other diphosphonucleosides, and allosterically inhibited by phosphoenolpyruvate. Functionally, catalyzes the phosphorylation of D-fructose 6-phosphate to fructose 1,6-bisphosphate by ATP, the first committing step of glycolysis. The sequence is that of ATP-dependent 6-phosphofructokinase from Bacillus licheniformis (strain ATCC 14580 / DSM 13 / JCM 2505 / CCUG 7422 / NBRC 12200 / NCIMB 9375 / NCTC 10341 / NRRL NRS-1264 / Gibson 46).